The primary structure comprises 564 residues: Probable diguanylate cyclase DgcQ (564 aa).

A run of 2 helical transmembrane segments spans residues leucine 20 to leucine 40 and isoleucine 360 to isoleucine 380. Residues histidine 428–asparagine 563 form the GGDEF domain. Position 436 (aspartate 436) interacts with Mg(2+). Residues asparagine 444, histidine 449, and aspartate 453 each coordinate substrate. Position 479 (glutamate 479) interacts with Mg(2+). Glutamate 479 (proton acceptor) is an active-site residue.

Homodimer. Requires Mg(2+) as cofactor.

Its subcellular location is the cell inner membrane. The enzyme catalyses 2 GTP = 3',3'-c-di-GMP + 2 diphosphate. Its pathway is glycan metabolism; bacterial cellulose biosynthesis. It participates in purine metabolism; 3',5'-cyclic di-GMP biosynthesis. Its function is as follows. Catalyzes the synthesis of cyclic-di-GMP (c-di-GMP) via the condensation of 2 GTP molecules. Cyclic-di-GMP is a second messenger which controls cell surface-associated traits in bacteria. Involved in the regulation of cellulose production. This chain is Probable diguanylate cyclase DgcQ, found in Escherichia coli O157:H7.